Here is a 517-residue protein sequence, read N- to C-terminus: Apolipoprotein N-acyltransferase (517 aa).

Helical transmembrane passes span 5-25, 26-46, 55-75, 90-110, 128-148, 162-182, and 193-213; these read SFFSLGRLLLAVPAGAIATLT, FAPYNYWLLAPVSIALLLWLL, GLIGFLWGLGLFGTGISWVHV, FLMSSLISYLALYPAAFGALF, VIWLLLDWVRGWALTGFPWLW, APILGVEGITLALVLISGALV, and LMVPVLIMALTWAANTVSWVV. The region spanning 225–471 is the CN hydrolase domain; it reads IQGNVPQELK…TAVLRATITP (247 aa). Catalysis depends on glutamate 264, which acts as the Proton acceptor. Residue lysine 330 is part of the active site. Cysteine 382 acts as the Nucleophile in catalysis.

This sequence belongs to the CN hydrolase family. Apolipoprotein N-acyltransferase subfamily.

The protein localises to the cell inner membrane. The enzyme catalyses N-terminal S-1,2-diacyl-sn-glyceryl-L-cysteinyl-[lipoprotein] + a glycerophospholipid = N-acyl-S-1,2-diacyl-sn-glyceryl-L-cysteinyl-[lipoprotein] + a 2-acyl-sn-glycero-3-phospholipid + H(+). It functions in the pathway protein modification; lipoprotein biosynthesis (N-acyl transfer). In terms of biological role, catalyzes the phospholipid dependent N-acylation of the N-terminal cysteine of apolipoprotein, the last step in lipoprotein maturation. The polypeptide is Apolipoprotein N-acyltransferase (Photobacterium profundum (strain SS9)).